Here is a 238-residue protein sequence, read N- to C-terminus: Histone deacetylase 7 (238 aa).

Disordered stretches follow at residues 1 to 26 (TPGSQPQPMDLRVGQRPTVEPPPEPA) and 47 to 72 (QQQRSAEPMRLSMDPPLPELQGGQQE). Positions 58–158 (SMDPPLPELQ…LPTEPPEHFP (101 aa)) are interaction with MEF2A. Residues Ser118 and Ser164 each carry the phosphoserine modification. The disordered stretch occupies residues 145–238 (PVPSLPTEPP…NPALGSEADG (94 aa)). Basic and acidic residues predominate over residues 176–190 (KSLERRKNPLLRKES). Residue Ser190 is modified to Phosphoserine; by PKD/PRKD2. The span at 206–221 (SSPSSSSTPASGCSSP) shows a compositional bias: low complexity.

This sequence belongs to the histone deacetylase family. HD type 2 subfamily. Interacts with HDAC1, HDAC2, HDAC3, HDAC4, HDAC5, NCOR1, NCOR2, SIN3A, SIN3B, RBBP4, RBBP7, MTA1L1, SAP30 and MBD3. Interacts with KAT5 and EDNRA. Interacts with the 14-3-3 protein YWHAE, MEF2A, MEF2B and MEF2C. Interacts with ZMYND15. Interacts with KDM5B. Interacts with PML. Interacts with FOXP3. Interacts with RARA. May be phosphorylated by CaMK1. Phosphorylated by the PKC kinases PKN1 and PKN2, impairing nuclear import. Phosphorylation at Ser-164 by MARK2, MARK3 and PRKD1 promotes interaction with 14-3-3 proteins and export from the nucleus. Phosphorylation at Ser-164 is a prerequisite for phosphorylation at Ser-190.

Its subcellular location is the nucleus. It is found in the cytoplasm. It carries out the reaction N(6)-acetyl-L-lysyl-[histone] + H2O = L-lysyl-[histone] + acetate. It catalyses the reaction N(6)-acetyl-L-lysyl-[protein] + H2O = L-lysyl-[protein] + acetate. Its function is as follows. Responsible for the deacetylation of lysine residues on the N-terminal part of the core histones (H2A, H2B, H3 and H4). Histone deacetylation gives a tag for epigenetic repression and plays an important role in transcriptional regulation, cell cycle progression and developmental events. Histone deacetylases act via the formation of large multiprotein complexes. Involved in muscle maturation by repressing transcription of myocyte enhancer factors such as MEF2A, MEF2B and MEF2C. During muscle differentiation, it shuttles into the cytoplasm, allowing the expression of myocyte enhancer factors. May be involved in Epstein-Barr virus (EBV) latency, possibly by repressing the viral BZLF1 gene. Positively regulates the transcriptional repressor activity of FOXP3. Serves as a corepressor of RARA, causing its deacetylation and inhibition of RARE DNA element binding. In association with RARA, plays a role in the repression of microRNA-10a and thereby in the inflammatory response. Also acetylates non-histone proteins, such as ALKBH5. The sequence is that of Histone deacetylase 7 (Hdac7) from Rattus norvegicus (Rat).